A 258-amino-acid chain; its full sequence is 3-deoxy-manno-octulosonate cytidylyltransferase (258 aa).

This sequence belongs to the KdsB family.

The protein resides in the cytoplasm. The catalysed reaction is 3-deoxy-alpha-D-manno-oct-2-ulosonate + CTP = CMP-3-deoxy-beta-D-manno-octulosonate + diphosphate. The protein operates within nucleotide-sugar biosynthesis; CMP-3-deoxy-D-manno-octulosonate biosynthesis; CMP-3-deoxy-D-manno-octulosonate from 3-deoxy-D-manno-octulosonate and CTP: step 1/1. It participates in bacterial outer membrane biogenesis; lipopolysaccharide biosynthesis. Its function is as follows. Activates KDO (a required 8-carbon sugar) for incorporation into bacterial lipopolysaccharide in Gram-negative bacteria. The chain is 3-deoxy-manno-octulosonate cytidylyltransferase from Blochmanniella floridana.